A 319-amino-acid chain; its full sequence is Transaldolase (319 aa).

Catalysis depends on Lys126, which acts as the Schiff-base intermediate with substrate.

It belongs to the transaldolase family. Type 1 subfamily. As to quaternary structure, homodimer.

Its subcellular location is the cytoplasm. The enzyme catalyses D-sedoheptulose 7-phosphate + D-glyceraldehyde 3-phosphate = D-erythrose 4-phosphate + beta-D-fructose 6-phosphate. It participates in carbohydrate degradation; pentose phosphate pathway; D-glyceraldehyde 3-phosphate and beta-D-fructose 6-phosphate from D-ribose 5-phosphate and D-xylulose 5-phosphate (non-oxidative stage): step 2/3. In terms of biological role, transaldolase is important for the balance of metabolites in the pentose-phosphate pathway. This chain is Transaldolase, found in Bordetella avium (strain 197N).